We begin with the raw amino-acid sequence, 215 residues long: MKYQLTALEARVIGCLLEKQVTTPEQYPLSVNGVVTACNQKTNREPVMNLSESEVQEQLDNLVKRHYLRTVSGFGNRVTKYEQRFCNSEFGDLKLSAAEVALITTLLLRGAQTPGELRSRAARMYEFSDMAEVESTLEQLANREDGPFVVRLAREPGKRESRYMHLFSGEVEDQPAVTDMSNAVDGDLQARVEALEIEVAELKPRLDSLLAHLGD.

Lys80 carries the N6-acetyllysine modification.

The protein belongs to the UPF0502 family.

This is UPF0502 protein YceH from Shigella boydii serotype 18 (strain CDC 3083-94 / BS512).